Reading from the N-terminus, the 72-residue chain is Peptide Ctri9194 (72 aa).

The N-terminal stretch at 1-23 (MKTQNVLLSFGIVFLMISFSSET) is a signal peptide. Ile38 carries the post-translational modification Isoleucine amide. Residues 42 to 72 (SLKDVESLDFLFDPTFTAADLAVLENALEDY) constitute a propeptide that is removed on maturation.

It belongs to the non-disulfide-bridged peptide (NDBP) superfamily. Short antimicrobial peptide (group 4) family. As to expression, expressed by the venom gland.

Its subcellular location is the secreted. In terms of biological role, antimicrobial peptide. The protein is Peptide Ctri9194 of Chaerilus tricostatus (Scorpion).